Consider the following 346-residue polypeptide: Phosphate acyltransferase (346 aa).

This sequence belongs to the PlsX family. As to quaternary structure, homodimer. Probably interacts with PlsY.

It localises to the cytoplasm. It catalyses the reaction a fatty acyl-[ACP] + phosphate = an acyl phosphate + holo-[ACP]. It participates in lipid metabolism; phospholipid metabolism. Its function is as follows. Catalyzes the reversible formation of acyl-phosphate (acyl-PO(4)) from acyl-[acyl-carrier-protein] (acyl-ACP). This enzyme utilizes acyl-ACP as fatty acyl donor, but not acyl-CoA. This is Phosphate acyltransferase from Pelobacter propionicus (strain DSM 2379 / NBRC 103807 / OttBd1).